A 776-amino-acid chain; its full sequence is LPS-assembly protein LptD (776 aa).

Positions 1–24 (MQHFSRTFLAASIATALFAPYAQA) are cleaved as a signal peptide.

The protein belongs to the LptD family. In terms of assembly, component of the lipopolysaccharide transport and assembly complex. Interacts with LptE and LptA.

The protein resides in the cell outer membrane. In terms of biological role, together with LptE, is involved in the assembly of lipopolysaccharide (LPS) at the surface of the outer membrane. This Vibrio vulnificus (strain YJ016) protein is LPS-assembly protein LptD.